A 790-amino-acid chain; its full sequence is Lysine biosynthesis regulatory protein LYS14 (790 aa).

Disordered regions lie at residues 1-50 (MFES…SCFE) and 72-157 (FNHK…YSRN). Low complexity predominate over residues 35 to 47 (SGSSFTNSGTSTS). Composition is skewed to polar residues over residues 75-113 (KQMT…SEQD) and 120-142 (TISQ…TSTV). A DNA-binding region (zn(2)-C6 fungal-type) is located at residues 159-186 (CSECKRRRMKCDETKPTCWQCARLNRQC). Residues 195–258 (KKRRTSNAQR…PKPITDNGKN (64 aa)) form a disordered region. The span at 222–239 (ARKRQHSSCKAEKKKKVR) shows a compositional bias: basic residues.

The protein localises to the nucleus. Its function is as follows. Activates the transcription of lysine biosynthesis genes. This activation is dependent on the inducer alpha-aminoadipate semialdehyde and repressed by lysine. This is Lysine biosynthesis regulatory protein LYS14 (LYS14) from Saccharomyces cerevisiae (strain ATCC 204508 / S288c) (Baker's yeast).